Here is a 490-residue protein sequence, read N- to C-terminus: Cytochrome P450 2C29 (490 aa).

Residues 1 to 25 form the signal peptide; sequence MDLVVFLALTLSCLILLSLWRQSSG. 3 positions are modified to N6-acetyllysine: lysine 249, lysine 252, and lysine 375. Cysteine 435 serves as a coordination point for heme.

The protein belongs to the cytochrome P450 family. Requires heme as cofactor. As to expression, expressed in liver as well as in extrahepatic tissues including brain, kidney, lung, heart, and intestine.

The protein localises to the endoplasmic reticulum membrane. The protein resides in the microsome membrane. The catalysed reaction is an organic molecule + reduced [NADPH--hemoprotein reductase] + O2 = an alcohol + oxidized [NADPH--hemoprotein reductase] + H2O + H(+). It catalyses the reaction (5Z,8Z,11Z,14Z)-eicosatetraenoate + reduced [NADPH--hemoprotein reductase] + O2 = 14,15-epoxy-(5Z,8Z,11Z)-eicosatrienoate + oxidized [NADPH--hemoprotein reductase] + H2O + H(+). The protein operates within lipid metabolism; arachidonate metabolism. Functionally, a cytochrome P450 monooxygenase that selectively catalyzes the epoxidation of 14,15 double bond of (5Z,8Z,11Z,14Z)-eicosatetraenoic acid (arachidonate) forming 14,15-epoxyeicosatrienoic acid (14,15-EET) regioisomer. Mechanistically, uses molecular oxygen inserting one oxygen atom into a substrate, and reducing the second into a water molecule, with two electrons provided by NADPH via cytochrome P450 reductase (CPR; NADPH--hemoprotein reductase). The chain is Cytochrome P450 2C29 from Mus musculus (Mouse).